The following is a 231-amino-acid chain: Large ribosomal subunit protein uL1 (231 aa).

The protein belongs to the universal ribosomal protein uL1 family. Part of the 50S ribosomal subunit.

Binds directly to 23S rRNA. The L1 stalk is quite mobile in the ribosome, and is involved in E site tRNA release. In terms of biological role, protein L1 is also a translational repressor protein, it controls the translation of the L11 operon by binding to its mRNA. The protein is Large ribosomal subunit protein uL1 of Methylocella silvestris (strain DSM 15510 / CIP 108128 / LMG 27833 / NCIMB 13906 / BL2).